Consider the following 780-residue polypeptide: Neutral ceramidase (780 aa).

The Cytoplasmic portion of the chain corresponds to 1 to 12 (MAKRTFSNLETF). Residues 13–33 (LIFLLVMMSAITVALLSLLFI) form a helical; Signal-anchor for type II membrane protein membrane-spanning segment. The Lumenal segment spans residues 34-780 (TSGTIENHKD…TSPAFEVVTI (747 aa)). Residues 47–90 (HFFSTTQSPPATQGSTAAQRSTATQHSTATQSSTATQTSPVPLT) are disordered. Residues 57-85 (ATQGSTAAQRSTATQHSTATQSSTATQTS) are compositionally biased toward low complexity. Thr-62 carries O-linked (GalNAc...) threonine glycosylation. O-linked (GalNAc...) serine glycosylation is present at Ser-67. O-linked (GalNAc...) threonine glycans are attached at residues Thr-68 and Thr-70. Ser-73 is a glycosylation site (O-linked (GalNAc...) serine). O-linked (GalNAc...) threonine glycans are attached at residues Thr-74 and Thr-76. O-linked (GalNAc...) serine glycans are attached at residues Ser-78 and Ser-79. O-linked (GalNAc...) threonine glycosylation is found at Thr-80, Thr-82, and Thr-84. The N-linked (GlcNAc...) asparagine glycan is linked to Asn-98. Leu-134 contacts Ca(2+). Asn-151 carries an N-linked (GlcNAc...) asparagine glycan. His-194 is a binding site for Zn(2+). N-linked (GlcNAc...) asparagine glycosylation occurs at Asn-217. Residue His-303 coordinates Zn(2+). Residue Asn-308 is glycosylated (N-linked (GlcNAc...) asparagine). Residue Ser-354 is the Nucleophile of the active site. 2 disulfides stabilise this stretch: Cys-362–Cys-376 and Cys-369–Cys-384. N-linked (GlcNAc...) asparagine glycosylation is found at Asn-440 and Asn-468. Cys-448 and Cys-498 form a disulfide bridge. Glu-540 contacts Zn(2+). Asn-564 carries an N-linked (GlcNAc...) asparagine glycan. Residue Tyr-579 coordinates Zn(2+). Asp-712, Ser-714, and Thr-717 together coordinate Ca(2+). A glycan (N-linked (GlcNAc...) asparagine) is linked at Asn-730. A required for correct folding and localization region spans residues 770–780 (GTSPAFEVVTI). O-linked (GalNAc...) threonine glycosylation occurs at Thr-779.

The protein belongs to the neutral ceramidase family. The cofactor is Zn(2+). Proteolytic cleavage of the N-terminus removes the signal-anchor and produces a soluble form of the protein. Post-translationally, N-glycosylated. Required for enzyme activity. In terms of processing, O-glycosylated. Required to retain it as a type II membrane protein at the cell surface. Phosphorylated. May prevent ubiquitination and subsequent degradation. Post-translationally, ubiquitinated, leading to its degradation by the proteasome. Ubiquitination is triggered by nitric oxide. In terms of tissue distribution, primarily expressed in intestine. Ubiquitously expressed with higher levels in kidney, skeletal muscle and heart. The ubiquitous expression observed for ASAH2 might be an experimental artifact due to the paralog ASAH2B.

The protein localises to the cell membrane. It is found in the membrane raft. Its subcellular location is the membrane. The protein resides in the caveola. It localises to the golgi apparatus membrane. The protein localises to the mitochondrion. It is found in the secreted. Its subcellular location is the extracellular exosome. It catalyses the reaction an N-acylsphing-4-enine + H2O = sphing-4-enine + a fatty acid. The enzyme catalyses N-dodecanoylsphing-4-enine + H2O = dodecanoate + sphing-4-enine. It carries out the reaction N-hexadecanoylsphing-4-enine + H2O = sphing-4-enine + hexadecanoate. The catalysed reaction is N-octanoylsphing-4-enine + H2O = octanoate + sphing-4-enine. It catalyses the reaction N-(hexanoyl)sphing-4-enine + H2O = hexanoate + sphing-4-enine. The enzyme catalyses N-octadecanoylsphing-4-enine + H2O = sphing-4-enine + octadecanoate. It carries out the reaction N-tetradecanoylsphing-4-enine + H2O = tetradecanoate + sphing-4-enine. The catalysed reaction is N-(9Z-octadecenoyl)-sphing-4-enine + H2O = sphing-4-enine + (9Z)-octadecenoate. It catalyses the reaction N-(15Z-tetracosenoyl)-sphing-4-enine + H2O = (15Z)-tetracosenoate + sphing-4-enine. The enzyme catalyses sphinganine + hexadecanoate = N-hexadecanoylsphinganine + H2O. It carries out the reaction N-(octadecanoyl)-sphinganine + H2O = sphinganine + octadecanoate. It participates in lipid metabolism; sphingolipid metabolism. Inhibited by dithiothreitol (DTT) and 2-mercaptoethanol. Activity is mildly stimulated by Ca(2+) and Mg(2+), but is not inhibited by EDTA. Activity is inhibited by millimolar levels of Fe(2+), Zn(2+) and Cu(2+). Inhibited by cholesterol. In terms of biological role, plasma membrane ceramidase that hydrolyzes sphingolipid ceramides into sphingosine and free fatty acids at neutral pH. Ceramides, sphingosine, and its phosphorylated form sphingosine-1-phosphate are bioactive lipids that mediate cellular signaling pathways regulating several biological processes including cell proliferation, apoptosis and differentiation. Also catalyzes the reverse reaction allowing the synthesis of ceramides from fatty acids and sphingosine. Together with sphingomyelinase, participates in the production of sphingosine and sphingosine-1-phosphate from the degradation of sphingomyelin, a sphingolipid enriched in the plasma membrane of cells. Also participates in the hydrolysis of ceramides from the extracellular milieu allowing the production of sphingosine-1-phosphate inside and outside cells. This is the case for instance with the digestion of dietary sphingolipids in the intestinal tract. The sequence is that of Neutral ceramidase (ASAH2) from Homo sapiens (Human).